A 222-amino-acid chain; its full sequence is Eukaryotic translation initiation factor 3 subunit K (222 aa).

A PCI domain is found at 46–208 (YDLEANLAVL…KIKTKNITEK (163 aa)).

It belongs to the eIF-3 subunit K family. As to quaternary structure, component of the eukaryotic translation initiation factor 3 (eIF-3) complex. The eIF-3 complex interacts with pix.

The protein localises to the cytoplasm. In terms of biological role, component of the eukaryotic translation initiation factor 3 (eIF-3) complex, which is involved in protein synthesis of a specialized repertoire of mRNAs and, together with other initiation factors, stimulates binding of mRNA and methionyl-tRNAi to the 40S ribosome. The eIF-3 complex specifically targets and initiates translation of a subset of mRNAs involved in cell proliferation. In Drosophila virilis (Fruit fly), this protein is Eukaryotic translation initiation factor 3 subunit K.